The sequence spans 254 residues: Aspartate/glutamate leucyltransferase (254 aa).

This sequence belongs to the R-transferase family. Bpt subfamily.

It localises to the cytoplasm. The catalysed reaction is N-terminal L-glutamyl-[protein] + L-leucyl-tRNA(Leu) = N-terminal L-leucyl-L-glutamyl-[protein] + tRNA(Leu) + H(+). It carries out the reaction N-terminal L-aspartyl-[protein] + L-leucyl-tRNA(Leu) = N-terminal L-leucyl-L-aspartyl-[protein] + tRNA(Leu) + H(+). Functionally, functions in the N-end rule pathway of protein degradation where it conjugates Leu from its aminoacyl-tRNA to the N-termini of proteins containing an N-terminal aspartate or glutamate. The chain is Aspartate/glutamate leucyltransferase from Xylella fastidiosa (strain M23).